Reading from the N-terminus, the 72-residue chain is MGRGGCAQLSYSELLSRRRELERKYLDLRFQLVVEHVDNKLMKRILRRQIAAVNTFLRHKELTELEKRGVRE.

It belongs to the universal ribosomal protein uL29 family.

The sequence is that of Large ribosomal subunit protein uL29 (rpmC) from Treponema pallidum (strain Nichols).